Here is a 226-residue protein sequence, read N- to C-terminus: UPF0173 metal-dependent hydrolase Minf_0129 (226 aa).

The protein belongs to the UPF0173 family.

The polypeptide is UPF0173 metal-dependent hydrolase Minf_0129 (Methylacidiphilum infernorum (isolate V4) (Methylokorus infernorum (strain V4))).